The primary structure comprises 152 residues: Small ribosomal subunit protein uS13 (152 aa).

Phosphoserine is present on Ser-41.

It belongs to the universal ribosomal protein uS13 family.

It is found in the cytoplasm. Located at the top of the head of the 40S subunit, it contacts several helices of the 18S rRNA. This is Small ribosomal subunit protein uS13 (RpS18) from Drosophila melanogaster (Fruit fly).